Here is a 21-residue protein sequence, read N- to C-terminus: Nigrocin-2HSa (21 aa).

Cysteines 15 and 21 form a disulfide.

Expressed by the skin glands.

The protein resides in the secreted. Functionally, has antibacterial activity against the Gram-positive bacterium S.aureus ATCC 25923 (MIC=56 uM) and the Gram-negative bacterium E.coli ATCC 25726 (MIC=28 uM). This is Nigrocin-2HSa from Odorrana hosii (Hose's rock frog).